A 492-amino-acid polypeptide reads, in one-letter code: Catalase isozyme 1 (492 aa).

Active-site residues include His-65 and Asn-138. Tyr-348 contacts heme.

Belongs to the catalase family. In terms of assembly, homotetramer. Requires heme as cofactor. In terms of tissue distribution, high expression in seeds and early seedlings.

It localises to the glyoxysome. It carries out the reaction 2 H2O2 = O2 + 2 H2O. Occurs in almost all aerobically respiring organisms and serves to protect cells from the toxic effects of hydrogen peroxide. This chain is Catalase isozyme 1 (CAT1), found in Cucurbita pepo (Vegetable marrow).